Consider the following 3582-residue polypeptide: Ubiquitin carboxyl-terminal hydrolase 34 (3582 aa).

4 positions are modified to phosphoserine: serine 352, serine 486, serine 487, and serine 490. Disordered regions lie at residues 503 to 533 (EEEE…HQSG), 551 to 670 (QQRL…ELRN), 682 to 705 (GESQ…VFNT), 775 to 801 (HHHH…DGHM), and 1496 to 1515 (TGSY…DQVE). Low complexity predominate over residues 510–524 (AAPSPWSPAASPQSS). The span at 560–570 (SMQGSSDETAN) shows a compositional bias: polar residues. Residues 571 to 590 (SGEDGSSGPGSSSGHSDGSS) are compositionally biased toward low complexity. Residues 591–609 (NEVNSSHASQSAGSPGSEV) show a composition bias toward polar residues. Residues 610 to 653 (QSEDIADIEALKEEEEEEEEEEEEEEEEDDEEEEDEEEDDDDDD) show a composition bias toward acidic residues. Polar residues predominate over residues 684-697 (SQGTSERNGTNSGT). Residues 775 to 798 (HHHHHHHHHHHHHHHHHHHHHHHD) show a composition bias toward basic residues. Residues 1504 to 1514 (PDSDDSSEDQV) show a composition bias toward acidic residues. The residue at position 1506 (serine 1506) is a Phosphoserine. The 346-residue stretch at 1931 to 2276 (VGLTNLGATC…SAYMLFYKRM (346 aa)) folds into the USP domain. The active-site Nucleophile is cysteine 1940. Histidine 2201 functions as the Proton acceptor in the catalytic mechanism. Serine 2525 is modified (phosphoserine). The segment at 3369 to 3484 (SLQEQEAKER…QSNNGRFDDC (116 aa)) is disordered. Residues 3373 to 3384 (QEAKERKTKDDE) are compositionally biased toward basic and acidic residues. A phosphoserine mark is found at serine 3395 and serine 3396. Phosphothreonine is present on threonine 3418. A phosphoserine mark is found at serine 3423 and serine 3443. Residues 3463-3484 (DGSHIRSQHAEEQSNNGRFDDC) are compositionally biased toward basic and acidic residues. Serine 3539 is subject to Phosphoserine.

This sequence belongs to the peptidase C19 family. In terms of assembly, interacts with AXIN1 and AXIN2.

The enzyme catalyses Thiol-dependent hydrolysis of ester, thioester, amide, peptide and isopeptide bonds formed by the C-terminal Gly of ubiquitin (a 76-residue protein attached to proteins as an intracellular targeting signal).. In terms of biological role, ubiquitin hydrolase that can remove conjugated ubiquitin from AXIN1 and AXIN2, thereby acting as a regulator of Wnt signaling pathway. Acts as an activator of the Wnt signaling pathway downstream of the beta-catenin destruction complex by deubiquitinating and stabilizing AXIN1 and AXIN2, leading to promote nuclear accumulation of AXIN1 and AXIN2 and positively regulate beta-catenin (CTNBB1)-mediated transcription. Recognizes and hydrolyzes the peptide bond at the C-terminal Gly of ubiquitin. Involved in the processing of poly-ubiquitin precursors as well as that of ubiquitinated proteins. The sequence is that of Ubiquitin carboxyl-terminal hydrolase 34 (Usp34) from Mus musculus (Mouse).